The following is a 394-amino-acid chain: ATP phosphoribosyltransferase regulatory subunit (394 aa).

This sequence belongs to the class-II aminoacyl-tRNA synthetase family. HisZ subfamily. As to quaternary structure, heteromultimer composed of HisG and HisZ subunits.

The protein resides in the cytoplasm. The protein operates within amino-acid biosynthesis; L-histidine biosynthesis; L-histidine from 5-phospho-alpha-D-ribose 1-diphosphate: step 1/9. In terms of biological role, required for the first step of histidine biosynthesis. May allow the feedback regulation of ATP phosphoribosyltransferase activity by histidine. The chain is ATP phosphoribosyltransferase regulatory subunit from Pseudomonas aeruginosa (strain LESB58).